A 395-amino-acid polypeptide reads, in one-letter code: Vacuolar protease A (395 aa).

The N-terminal stretch at 1–18 (MKGSLLLAGATLLGCTSA) is a signal peptide. The propeptide at 19-72 (KLHSLKLKKVSLKEQLEHADIDVQIKSLGQKYMGIRPGQHEQQMFKEQTPIEAE) is activation peptide. The region spanning 87–392 (YFSEISIGTP…DLGKGTVGLA (306 aa)) is the Peptidase A1 domain. D105 is a catalytic residue. C118 and C123 are oxidised to a cystine. N-linked (GlcNAc...) asparagine glycosylation is present at N140. The active site involves D289. C318 and C351 are oxidised to a cystine. An N-linked (GlcNAc...) asparagine glycan is attached at N335.

Belongs to the peptidase A1 family.

Its subcellular location is the vacuole lumen. The protein resides in the secreted. It catalyses the reaction Hydrolysis of proteins with broad specificity for peptide bonds. Cleaves -Leu-Leu-|-Val-Tyr- bond in a synthetic substrate. Does not act on esters of Tyr or Arg.. Functionally, vacuolar aspartic endopeptidase which is probably also secreted and contributes to virulence. This chain is Vacuolar protease A (PEP2), found in Arthroderma otae (strain ATCC MYA-4605 / CBS 113480) (Microsporum canis).